Reading from the N-terminus, the 161-residue chain is Cyclic pyranopterin monophosphate synthase (161 aa).

Residues 75 to 77 (LCH) and 113 to 114 (ME) contribute to the substrate site. D128 is a catalytic residue.

This sequence belongs to the MoaC family. In terms of assembly, homohexamer; trimer of dimers.

It carries out the reaction (8S)-3',8-cyclo-7,8-dihydroguanosine 5'-triphosphate = cyclic pyranopterin phosphate + diphosphate. It functions in the pathway cofactor biosynthesis; molybdopterin biosynthesis. Catalyzes the conversion of (8S)-3',8-cyclo-7,8-dihydroguanosine 5'-triphosphate to cyclic pyranopterin monophosphate (cPMP). The polypeptide is Cyclic pyranopterin monophosphate synthase (Salmonella arizonae (strain ATCC BAA-731 / CDC346-86 / RSK2980)).